Here is a 307-residue protein sequence, read N- to C-terminus: F-box protein At2g23160 (307 aa).

Positions 2 to 49 (NSSSPISIDLIAEILSRVPSKSVARFRCVSKPWASMIRRPYFTELFLT) constitute an F-box domain.

This Arabidopsis thaliana (Mouse-ear cress) protein is F-box protein At2g23160.